A 178-amino-acid polypeptide reads, in one-letter code: ATP-dependent protease subunit HslV (178 aa).

T7 is an active-site residue. 3 residues coordinate Na(+): G162, C165, and T168.

The protein belongs to the peptidase T1B family. HslV subfamily. In terms of assembly, a double ring-shaped homohexamer of HslV is capped on each side by a ring-shaped HslU homohexamer. The assembly of the HslU/HslV complex is dependent on binding of ATP.

The protein resides in the cytoplasm. The catalysed reaction is ATP-dependent cleavage of peptide bonds with broad specificity.. Allosterically activated by HslU binding. In terms of biological role, protease subunit of a proteasome-like degradation complex believed to be a general protein degrading machinery. In Burkholderia multivorans (strain ATCC 17616 / 249), this protein is ATP-dependent protease subunit HslV.